Consider the following 250-residue polypeptide: Octanoyltransferase (250 aa).

Positions 44–224 constitute a BPL/LPL catalytic domain; the sequence is GAGSDRLLLL…AVVQALNGDL (181 aa). Substrate contacts are provided by residues 82-89, 154-156, and 167-169; these read RGGKITWH, AIG, and GIS. C185 acts as the Acyl-thioester intermediate in catalysis. The interval 224-250 is disordered; that stretch reads LPVRDHDLPRPGTTPAAPNSTRVRSMT. Residues 239–250 are compositionally biased toward polar residues; that stretch reads AAPNSTRVRSMT.

It belongs to the LipB family.

It localises to the cytoplasm. It catalyses the reaction octanoyl-[ACP] + L-lysyl-[protein] = N(6)-octanoyl-L-lysyl-[protein] + holo-[ACP] + H(+). It participates in protein modification; protein lipoylation via endogenous pathway; protein N(6)-(lipoyl)lysine from octanoyl-[acyl-carrier-protein]: step 1/2. In terms of biological role, catalyzes the transfer of endogenously produced octanoic acid from octanoyl-acyl-carrier-protein onto the lipoyl domains of lipoate-dependent enzymes. Lipoyl-ACP can also act as a substrate although octanoyl-ACP is likely to be the physiological substrate. The chain is Octanoyltransferase from Nocardia farcinica (strain IFM 10152).